A 714-amino-acid polypeptide reads, in one-letter code: Cadherin-13 (714 aa).

Residues 1 to 22 (MQPRTPLTLCVLLSQVLLVTSA) form the signal peptide. Residues 23–138 (DDLECTPGFQ…RTSPVPRQKR (116 aa)) constitute a propeptide that is removed on maturation. 5 Cadherin domains span residues 143-245 (SPIL…RPIF), 246-363 (REGP…SPKF), 364-477 (TKKE…GPVF), 478-585 (YPDP…APVI), and 586-680 (YPTV…VQVC). The tract at residues 156-183 (PRDVGKVVDSDRPEGSKFRLTGKGVDQD) is disordered. The span at 158–172 (DVGKVVDSDRPEGSK) shows a compositional bias: basic and acidic residues. Asparagine 382, asparagine 489, asparagine 500, asparagine 530, asparagine 598, asparagine 638, and asparagine 671 each carry an N-linked (GlcNAc...) asparagine glycan. Residue glycine 693 is the site of GPI-anchor amidated glycine attachment. Positions 694 to 714 (ALHLSLSLLLLFSLLSLLSGL) are cleaved as a propeptide — removed in mature form.

In terms of assembly, by contrast to classical cadherins, homodimerization in trans is not mediated by cadherin EC1 domain strand-swapping, but instead through a homophilic adhesive interface which joins two elongated EC1-EC2 domains through a region near their Ca2+-binding sites to form a tetrahedral, X-like shape.

It is found in the cell membrane. It localises to the cytoplasm. Its function is as follows. Cadherins are calcium-dependent cell adhesion proteins. They preferentially interact with themselves in a homophilic manner in connecting cells; cadherins may thus contribute to the sorting of heterogeneous cell types. May act as a negative regulator of neural cell growth. This Mus musculus (Mouse) protein is Cadherin-13 (Cdh13).